Consider the following 524-residue polypeptide: Putative ribose/galactose/methyl galactoside import ATP-binding protein 1 (524 aa).

ABC transporter domains are found at residues 35–271 (LEVR…VGRE) and 281–520 (VPIG…RIMD). Position 67–74 (67–74 (GENGAGKS)) interacts with ATP.

It belongs to the ABC transporter superfamily. Carbohydrate importer 2 (CUT2) (TC 3.A.1.2) family.

The protein resides in the cell inner membrane. It catalyses the reaction D-ribose(out) + ATP + H2O = D-ribose(in) + ADP + phosphate + H(+). It carries out the reaction D-galactose(out) + ATP + H2O = D-galactose(in) + ADP + phosphate + H(+). Functionally, part of an ABC transporter complex involved in carbohydrate import. Could be involved in ribose, galactose and/or methyl galactoside import. Responsible for energy coupling to the transport system. The chain is Putative ribose/galactose/methyl galactoside import ATP-binding protein 1 from Burkholderia cenocepacia (strain HI2424).